The chain runs to 513 residues: Melianol synthase CYP71BQ4 (513 aa).

A helical transmembrane segment spans residues methionine 10–isoleucine 30. Cysteine 451 is a heme binding site.

The protein belongs to the cytochrome P450 family. It depends on heme as a cofactor. As to expression, accumulates in mature fruits and in juice vesicles.

The protein resides in the membrane. The enzyme catalyses dihydroniloticin + 2 reduced [NADPH--hemoprotein reductase] + 2 O2 = melianol + 2 oxidized [NADPH--hemoprotein reductase] + 3 H2O + 2 H(+). Its pathway is secondary metabolite biosynthesis; terpenoid biosynthesis. Functionally, monooxygenase involved in the biosynthesis of limonoids triterpene natural products such as limonin, a compound with insecticidal activity responsible for the bitter taste in citrus. Catalyzes the conversion of dihydroniloticin to the protolimonoid melianol. This chain is Melianol synthase CYP71BQ4, found in Citrus sinensis (Sweet orange).